A 118-amino-acid polypeptide reads, in one-letter code: Class II hydrophobin CRP (118 aa).

Positions 1–22 are cleaved as a signal peptide; that stretch reads MQFSIIAISFLASLAMASPAKR. Positions 20–46 are disordered; that stretch reads AKRGGGGGGSGSGSGSGSGSGSGGGST. Residues 22–45 show a composition bias toward gly residues; it reads RGGGGGGSGSGSGSGSGSGSGGGS. 7 repeat units span residues 29-30, 31-32, 33-34, 35-36, 37-38, 39-40, and 41-42. A 7 X 2 AA tandem repeats of S-G region spans residues 29-42; that stretch reads SGSGSGSGSGSGSG. 4 disulfide bridges follow: C51–C100, C61–C91, C62–C74, and C101–C112.

It belongs to the cerato-ulmin hydrophobin family. As to quaternary structure, homotetramer. Further self-assembles to form highly ordered films at water-air interfaces through intermolecular interactions.

It localises to the secreted. The protein localises to the cell wall. Its function is as follows. Aerial growth, conidiation, and dispersal of filamentous fungi in the environment rely upon a capability of their secreting small amphipathic proteins called hydrophobins (HPBs) with low sequence identity. Class I can self-assemble into an outermost layer of rodlet bundles on aerial cell surfaces, conferring cellular hydrophobicity that supports fungal growth, development and dispersal; whereas Class II form highly ordered films at water-air interfaces through intermolecular interactions but contribute nothing to the rodlet structure. Cryparin is a class II hydrophobin that is the most abundant protein produced by this fungus when grown in liquid culture and that plays an essential role in the fitness of this important plant pathogen by facilitating the eruption of the fungal fruiting bodies through the bark of its host tree. This is Class II hydrophobin CRP from Cryphonectria parasitica (Chestnut blight fungus).